The sequence spans 103 residues: RNA-binding protein Hfq (103 aa).

Residues D9–V68 form the Sm domain. The interval V63–E103 is disordered. A compositionally biased stretch (polar residues) spans S81–A96.

Belongs to the Hfq family. In terms of assembly, homohexamer.

In terms of biological role, RNA chaperone that binds small regulatory RNA (sRNAs) and mRNAs to facilitate mRNA translational regulation in response to envelope stress, environmental stress and changes in metabolite concentrations. Also binds with high specificity to tRNAs. This Enterobacter sp. (strain 638) protein is RNA-binding protein Hfq.